The chain runs to 485 residues: Serine/threonine-protein kinase 4 (485 aa).

The Protein kinase domain occupies 30–281 (FDVLEKLGEG…ATELLQHPFI (252 aa)). Residues 36–44 (LGEGSYGSV) and K59 each bind ATP. D149 serves as the catalytic Proton acceptor. T183 carries the post-translational modification Phosphothreonine; by autocatalysis. Positions 287–313 (ESILRHLINEAQDAKLKRTELKQREVE) form a coiled coil. The 48-residue stretch at 431–478 (YSFLKDWSVTELQLRLNSLDPMMEQEIEEIHHKYQAKRQPILEAIESK) folds into the SARAH domain.

This sequence belongs to the protein kinase superfamily. STE Ser/Thr protein kinase family. STE20 subfamily. Homodimer; mediated via the coiled-coil region. Mg(2+) is required as a cofactor. In terms of processing, autophosphorylated on Thr-183. Proteolytically cleaved by caspase-3 during apoptosis at Asp-326 resulting in a 37 kDa form. Proteolytic cleavage results in kinase activation and nuclear translocation of the truncated form (MST1/N).

Its subcellular location is the cytoplasm. It is found in the nucleus. The catalysed reaction is L-seryl-[protein] + ATP = O-phospho-L-seryl-[protein] + ADP + H(+). It carries out the reaction L-threonyl-[protein] + ATP = O-phospho-L-threonyl-[protein] + ADP + H(+). The C-terminal non-catalytic region inhibits the kinase activity, the enzyme is activated by caspase-cleavage. Homodimerization and autophosphorylation of Thr-183 is also required for full activation. Its function is as follows. Stress-activated, pro-apoptotic kinase which, following caspase-cleavage, enters the nucleus and induces chromatin condensation followed by internucleosomal DNA fragmentation. Key component of the Hippo signaling pathway which plays a pivotal role in organ size control and tumor suppression by restricting proliferation and promoting apoptosis. The core of this pathway is composed of a kinase cascade wherein stk3/mst2 and stk4/mst1, in complex with its regulatory protein sav1, phosphorylates and activates lats1/2 in complex with its regulatory protein mob1, which in turn phosphorylates and inactivates yap1 oncoprotein and wwtr1/taz. Phosphorylation of yap1 by lats2 inhibits its translocation into the nucleus to regulate cellular genes important for cell proliferation, cell death, and cell migration. Phosphorylates 'Ser-14' of histone H2B (H2BS14ph) during apoptosis. The protein is Serine/threonine-protein kinase 4 (stk4) of Xenopus tropicalis (Western clawed frog).